Consider the following 271-residue polypeptide: 3-methyl-2-oxobutanoate hydroxymethyltransferase (271 aa).

Residues aspartate 51 and aspartate 90 each coordinate Mg(2+). Residues 51-52 (DS), aspartate 90, and lysine 118 contribute to the 3-methyl-2-oxobutanoate site. Glutamate 120 serves as a coordination point for Mg(2+). The Proton acceptor role is filled by glutamate 186.

Belongs to the PanB family. As to quaternary structure, homodecamer; pentamer of dimers. Mg(2+) is required as a cofactor.

It localises to the cytoplasm. It carries out the reaction 3-methyl-2-oxobutanoate + (6R)-5,10-methylene-5,6,7,8-tetrahydrofolate + H2O = 2-dehydropantoate + (6S)-5,6,7,8-tetrahydrofolate. It functions in the pathway cofactor biosynthesis; (R)-pantothenate biosynthesis; (R)-pantoate from 3-methyl-2-oxobutanoate: step 1/2. In terms of biological role, catalyzes the reversible reaction in which hydroxymethyl group from 5,10-methylenetetrahydrofolate is transferred onto alpha-ketoisovalerate to form ketopantoate. This is 3-methyl-2-oxobutanoate hydroxymethyltransferase from Stenotrophomonas maltophilia (strain R551-3).